The following is a 111-amino-acid chain: MSSAAHDNHGAGHGSLGSYAIGFVLSVILTAIPFYMVMDGGFSRHATILTMVVLGLVQVVVHLICFLHMNMSSEGRWNVMAFIFTVIVILLVVGLSLWIIFSADMLMMPMP.

Over 1–17 the chain is Cytoplasmic; the sequence is MSSAAHDNHGAGHGSLG. A helical membrane pass occupies residues 18–38; that stretch reads SYAIGFVLSVILTAIPFYMVM. The Periplasmic segment spans residues 39–46; the sequence is DGGFSRHA. Residues 47 to 67 form a helical membrane-spanning segment; it reads TILTMVVLGLVQVVVHLICFL. Over 68–80 the chain is Cytoplasmic; that stretch reads HMNMSSEGRWNVM. A helical transmembrane segment spans residues 81 to 101; it reads AFIFTVIVILLVVGLSLWIIF. Residues 102 to 111 lie on the Periplasmic side of the membrane; the sequence is SADMLMMPMP.

Belongs to the cytochrome c oxidase bacterial subunit 4 family. As to quaternary structure, heterooctamer of two A chains, two B chains, two C chains and two D chains.

It is found in the cell inner membrane. Functionally, cytochrome bo(3) ubiquinol terminal oxidase is the component of the aerobic respiratory chain of E.coli that predominates when cells are grown at high aeration. Has proton pump activity across the membrane in addition to electron transfer, pumping 2 protons/electron. This Pseudomonas aeruginosa (strain ATCC 15692 / DSM 22644 / CIP 104116 / JCM 14847 / LMG 12228 / 1C / PRS 101 / PAO1) protein is Cytochrome bo(3) ubiquinol oxidase subunit 4 (cyoD).